The chain runs to 850 residues: Protein monoglycylase TTLL8 (850 aa).

2 disordered regions span residues 1-29 (MEPERKGLSLASSSDGDGREENKLKQGIS) and 228-254 (RSSRSKPRDQREEAGSSDLSSRQDAEN). In terms of domain architecture, TTL spans 222 to 580 (SHQSCSRSSR…DRSCDIGNFE (359 aa)). Residues Lys-354, 360-361 (RG), 392-395 (QKYI), 405-407 (KFD), and 449-450 (CN) each bind ATP. Arg-360 serves as a coordination point for a protein. Mg(2+) is bound by residues Asp-527, Glu-540, and Asn-542. Glu-540 contributes to the ATP binding site. The disordered stretch occupies residues 627-652 (AQPLKARGPSAMPDPAQGPPSPALQR).

Mg(2+) serves as cofactor.

It localises to the cytoplasm. The protein localises to the cytoskeleton. Its subcellular location is the cell projection. It is found in the cilium. The protein resides in the cilium axoneme. It localises to the flagellum axoneme. It carries out the reaction L-glutamyl-[protein] + glycine + ATP = glycyl-L-glutamyl-[protein] + ADP + phosphate + H(+). Monoglycylase which modifies both tubulin and non-tubulin proteins, adding a single glycine to the gamma-carboxyl groups of specific glutamate residues to generate monoglycine side chains within the C-terminal tail of target proteins. Not involved in elongation step of the polyglycylation reaction. Preferentially monoglycylates alpha-tubulin over beta-tubulin. Together with TTLL3, mediates microtubule glycylation of primary and motile cilia, which is essential for their stability and maintenance. Together with TTLL3, glycylates sperm flagella which regulates axonemal dynein motor activity, thereby controlling flagellar beat, directional sperm swimming and male fertility. Monoglycylates non-tubulin proteins such as ANP32A, ANP32B, SET, NCL and NAP1. The protein is Protein monoglycylase TTLL8 of Homo sapiens (Human).